We begin with the raw amino-acid sequence, 209 residues long: Thiamine-phosphate synthase (209 aa).

4-amino-2-methyl-5-(diphosphooxymethyl)pyrimidine-binding positions include 39-43 and asparagine 71; that span reads QLREK. Aspartate 72 and aspartate 91 together coordinate Mg(2+). Serine 110 is a binding site for 4-amino-2-methyl-5-(diphosphooxymethyl)pyrimidine. 136 to 138 is a 2-[(2R,5Z)-2-carboxy-4-methylthiazol-5(2H)-ylidene]ethyl phosphate binding site; that stretch reads TGT. Lysine 139 provides a ligand contact to 4-amino-2-methyl-5-(diphosphooxymethyl)pyrimidine. 2-[(2R,5Z)-2-carboxy-4-methylthiazol-5(2H)-ylidene]ethyl phosphate-binding positions include glycine 166 and 186-187; that span reads VS.

The protein belongs to the thiamine-phosphate synthase family. Mg(2+) serves as cofactor.

It catalyses the reaction 2-[(2R,5Z)-2-carboxy-4-methylthiazol-5(2H)-ylidene]ethyl phosphate + 4-amino-2-methyl-5-(diphosphooxymethyl)pyrimidine + 2 H(+) = thiamine phosphate + CO2 + diphosphate. The catalysed reaction is 2-(2-carboxy-4-methylthiazol-5-yl)ethyl phosphate + 4-amino-2-methyl-5-(diphosphooxymethyl)pyrimidine + 2 H(+) = thiamine phosphate + CO2 + diphosphate. It carries out the reaction 4-methyl-5-(2-phosphooxyethyl)-thiazole + 4-amino-2-methyl-5-(diphosphooxymethyl)pyrimidine + H(+) = thiamine phosphate + diphosphate. The protein operates within cofactor biosynthesis; thiamine diphosphate biosynthesis; thiamine phosphate from 4-amino-2-methyl-5-diphosphomethylpyrimidine and 4-methyl-5-(2-phosphoethyl)-thiazole: step 1/1. Functionally, condenses 4-methyl-5-(beta-hydroxyethyl)thiazole monophosphate (THZ-P) and 2-methyl-4-amino-5-hydroxymethyl pyrimidine pyrophosphate (HMP-PP) to form thiamine monophosphate (TMP). The sequence is that of Thiamine-phosphate synthase from Clostridium beijerinckii (strain ATCC 51743 / NCIMB 8052) (Clostridium acetobutylicum).